A 418-amino-acid chain; its full sequence is AP-3 complex subunit mu-1 (418 aa).

One can recognise an MHD domain in the interval 176–417; the sequence is NNEAYFDVVE…VTKAGKFQVR (242 aa).

This sequence belongs to the adaptor complexes medium subunit family. In terms of assembly, adaptor protein complex 3 (AP-3) is a heterotetramer composed of two large adaptins (delta-type subunit AP3D1 and beta-type subunit AP3B1 or AP3B2), a medium adaptin (mu-type subunit AP3M1 or AP3M2) and a small adaptin (sigma-type subunit APS1 or AP3S2). Interacts with AGAP1. AP-3 associates with the BLOC-1 complex.

Its subcellular location is the golgi apparatus. The protein localises to the cytoplasmic vesicle membrane. Part of the AP-3 complex, an adaptor-related complex which is not clathrin-associated. The complex is associated with the Golgi region as well as more peripheral structures. It facilitates the budding of vesicles from the Golgi membrane and may be directly involved in trafficking to lysosomes. In concert with the BLOC-1 complex, AP-3 is required to target cargos into vesicles assembled at cell bodies for delivery into neurites and nerve terminals. This is AP-3 complex subunit mu-1 (Ap3m1) from Mus musculus (Mouse).